A 275-amino-acid chain; its full sequence is Putative phosphoenolpyruvate synthase regulatory protein (275 aa).

Residue 153–160 (GVSRTGKT) participates in ADP binding.

It belongs to the pyruvate, phosphate/water dikinase regulatory protein family. PSRP subfamily.

It catalyses the reaction [pyruvate, water dikinase] + ADP = [pyruvate, water dikinase]-phosphate + AMP + H(+). The enzyme catalyses [pyruvate, water dikinase]-phosphate + phosphate + H(+) = [pyruvate, water dikinase] + diphosphate. In terms of biological role, bifunctional serine/threonine kinase and phosphorylase involved in the regulation of the phosphoenolpyruvate synthase (PEPS) by catalyzing its phosphorylation/dephosphorylation. The polypeptide is Putative phosphoenolpyruvate synthase regulatory protein (Nitrosomonas europaea (strain ATCC 19718 / CIP 103999 / KCTC 2705 / NBRC 14298)).